The chain runs to 262 residues: Global transcriptional regulator CodY (262 aa).

Residues 1–159 (MAHLLEKTRK…ASTVVGIQLL (159 aa)) form a GAF domain region. Positions 207–226 (ASVIADRIGITRSVIVNALR) form a DNA-binding region, H-T-H motif.

The protein belongs to the CodY family.

It localises to the cytoplasm. In terms of biological role, DNA-binding global transcriptional regulator which is involved in the adaptive response to starvation and acts by directly or indirectly controlling the expression of numerous genes in response to nutrient availability. During rapid exponential growth, CodY is highly active and represses genes whose products allow adaptation to nutrient depletion. The polypeptide is Global transcriptional regulator CodY (Streptococcus pneumoniae (strain JJA)).